The chain runs to 289 residues: Ribonuclease HII (289 aa).

A disordered region spans residues 1–55; it reads MIRDQAKTPGRAKSAAAAKASPAAKGGGNEAAQSAAGKAAAKPAAKPATSKSGKG. 2 stretches are compositionally biased toward low complexity: residues 7-24 and 31-55; these read KTPG…SPAA and AAQS…SGKG. The region spanning 76 to 264 is the RNase H type-2 domain; that stretch reads WPVAGCDEAG…VVAARRKHQP (189 aa). A divalent metal cation is bound by residues aspartate 82, glutamate 83, and aspartate 173.

This sequence belongs to the RNase HII family. Mn(2+) is required as a cofactor. Mg(2+) serves as cofactor.

It is found in the cytoplasm. It catalyses the reaction Endonucleolytic cleavage to 5'-phosphomonoester.. Its function is as follows. Endonuclease that specifically degrades the RNA of RNA-DNA hybrids. This chain is Ribonuclease HII, found in Bradyrhizobium sp. (strain BTAi1 / ATCC BAA-1182).